The sequence spans 906 residues: Kinesin-like protein KIN-7G (906 aa).

The 319-residue stretch at 26–344 folds into the Kinesin motor domain; sequence SVAVAVRFRP…LKFAHRAKHI (319 aa). 105–112 provides a ligand contact to ATP; that stretch reads GVTSSGKT. Coiled coils occupy residues 346 to 385, 733 to 814, and 839 to 875; these read IQATQNKIMDARSLIKKYQNEIRQLKEELEQLRRSIRTGT, SDEF…GRNQ, and GDMNALEAMLKEKDQRQAELHTKIEESKQKEAFLEKE. The tract at residues 803–840 is disordered; sequence RLSSELASGRNQRRGSHGPRGARRESHTKRYEPARRGD. The span at 813–823 shows a compositional bias: basic residues; sequence NQRRGSHGPRG. Over residues 824–840 the composition is skewed to basic and acidic residues; the sequence is ARRESHTKRYEPARRGD.

The protein belongs to the TRAFAC class myosin-kinesin ATPase superfamily. Kinesin family. KIN-7 subfamily.

In Oryza sativa subsp. japonica (Rice), this protein is Kinesin-like protein KIN-7G.